Reading from the N-terminus, the 185-residue chain is Ribosome-recycling factor (185 aa).

Belongs to the RRF family.

It is found in the cytoplasm. Responsible for the release of ribosomes from messenger RNA at the termination of protein biosynthesis. May increase the efficiency of translation by recycling ribosomes from one round of translation to another. This chain is Ribosome-recycling factor, found in Xylella fastidiosa (strain Temecula1 / ATCC 700964).